The chain runs to 159 residues: Aphid transmission protein (159 aa).

It belongs to the caulimoviridae ORF II family.

This protein is involved in virus transmission. This chain is Aphid transmission protein, found in Cauliflower mosaic virus (strain CM-1841) (CaMV).